Consider the following 227-residue polypeptide: uncharacterized protein (227 aa).

Residues 7–26 (IITLTILIFISGLLTAFLLL) traverse the membrane as a helical segment.

It is found in the membrane. This is an uncharacterized protein from Haemophilus influenzae (strain ATCC 51907 / DSM 11121 / KW20 / Rd).